The primary structure comprises 397 residues: Acetate kinase 2 (397 aa).

Asn10 serves as a coordination point for Mg(2+). Lys17 is a binding site for ATP. Residue Arg90 participates in substrate binding. Catalysis depends on Asp147, which acts as the Proton donor/acceptor. ATP contacts are provided by residues 207 to 211 (HLGNG), 281 to 283 (DAR), and 329 to 333 (GIGEN). Residue Glu385 participates in Mg(2+) binding.

It belongs to the acetokinase family. In terms of assembly, homodimer. It depends on Mg(2+) as a cofactor. Mn(2+) is required as a cofactor.

Its subcellular location is the cytoplasm. The enzyme catalyses acetate + ATP = acetyl phosphate + ADP. It functions in the pathway metabolic intermediate biosynthesis; acetyl-CoA biosynthesis; acetyl-CoA from acetate: step 1/2. Its function is as follows. Catalyzes the formation of acetyl phosphate from acetate and ATP. Can also catalyze the reverse reaction. In Aliivibrio fischeri (strain ATCC 700601 / ES114) (Vibrio fischeri), this protein is Acetate kinase 2.